We begin with the raw amino-acid sequence, 164 residues long: Large ribosomal subunit protein uL15 (164 aa).

Disordered regions lie at residues 1–49 and 143–164; these read MTKL…SIAG and EKAGGKLTTTKPEAAQDASAEA. The segment covering 22–36 has biased composition (gly residues); sequence RGPGSGKGKTAGRGV.

Belongs to the universal ribosomal protein uL15 family. Part of the 50S ribosomal subunit.

In terms of biological role, binds to the 23S rRNA. The sequence is that of Large ribosomal subunit protein uL15 from Phenylobacterium zucineum (strain HLK1).